Here is a 410-residue protein sequence, read N- to C-terminus: Protein trichome birefringence-like 34 (410 aa).

Residues 13-33 traverse the membrane as a helical; Signal-anchor for type II membrane protein segment; that stretch reads TSFHTIAAVLVAGLIFTAVFL. The short motif at 133–135 is the GDS motif element; it reads GDS. A DCXHWCLPGXXDXWN motif motif is present at residues 383-397; sequence DCIHWCLPGVPDVWN.

It belongs to the PC-esterase family. TBL subfamily.

It localises to the golgi apparatus membrane. Its function is as follows. May act as a bridging protein that binds pectin and other cell wall polysaccharides. Probably involved in maintaining esterification of pectins. May be involved in the specific O-acetylation of cell wall polymers. In Arabidopsis thaliana (Mouse-ear cress), this protein is Protein trichome birefringence-like 34 (TBL34).